Consider the following 328-residue polypeptide: Serine/threonine protein kinase RdoA (328 aa).

The active-site Proton acceptor is the Asp-201. Mg(2+) contacts are provided by Asn-206 and Asp-217. Asp-217 is a catalytic residue.

The protein belongs to the SrkA/RdoA protein kinase family. As to quaternary structure, monomer. Requires Mg(2+) as cofactor.

It is found in the cytoplasm. The enzyme catalyses L-seryl-[protein] + ATP = O-phospho-L-seryl-[protein] + ADP + H(+). It carries out the reaction L-threonyl-[protein] + ATP = O-phospho-L-threonyl-[protein] + ADP + H(+). Its function is as follows. A protein kinase that (auto)phosphorylates on Ser and Thr residues, probably involved in the extracytoplasmic stress response. Probably acts to suppress the effects of stress linked to accumulation of reactive oxygen species. In Salmonella typhimurium (strain LT2 / SGSC1412 / ATCC 700720), this protein is Serine/threonine protein kinase RdoA.